Reading from the N-terminus, the 59-residue chain is Large ribosomal subunit protein uL30 (59 aa).

The protein belongs to the universal ribosomal protein uL30 family. As to quaternary structure, part of the 50S ribosomal subunit.

The protein is Large ribosomal subunit protein uL30 of Buchnera aphidicola subsp. Acyrthosiphon pisum (strain 5A).